The primary structure comprises 78 residues: Exodeoxyribonuclease 7 small subunit (78 aa).

It belongs to the XseB family. Heterooligomer composed of large and small subunits.

It localises to the cytoplasm. The enzyme catalyses Exonucleolytic cleavage in either 5'- to 3'- or 3'- to 5'-direction to yield nucleoside 5'-phosphates.. Its function is as follows. Bidirectionally degrades single-stranded DNA into large acid-insoluble oligonucleotides, which are then degraded further into small acid-soluble oligonucleotides. The sequence is that of Exodeoxyribonuclease 7 small subunit from Paracoccus zeaxanthinifaciens.